Here is a 318-residue protein sequence, read N- to C-terminus: Protease HtpX homolog (318 aa).

The next 3 membrane-spanning stretches (helical) occupy residues M1–L21, I35–I55, and A56–V76. H167 contacts Zn(2+). E168 is a catalytic residue. H171 is a binding site for Zn(2+). The next 2 helical transmembrane spans lie at L178–L198 and I209–A229. E235 is a Zn(2+) binding site.

It belongs to the peptidase M48B family. Zn(2+) is required as a cofactor.

It localises to the cell membrane. The polypeptide is Protease HtpX homolog (Methanopyrus kandleri (strain AV19 / DSM 6324 / JCM 9639 / NBRC 100938)).